The chain runs to 662 residues: High affinity sulfate transporter 2 (662 aa).

Residues 1–35 form a disordered region; the sequence is MSQRVSDQAMAEVIAETRTNSSSRRHGGGDDTPSL. The next 12 helical transmembrane spans lie at 103–123, 128–148, 153–173, 182–202, 205–225, 264–284, 291–311, 346–366, 383–403, 420–440, 447–467, and 481–501; these read GDFI…LAYA, LDPW…AFMG, IAIG…SNEI, LRLA…LGVC, GFLI…GAAI, WETI…KYIA, FWVS…FVYI, AGVR…MAIG, MVAM…VTTG, VSNI…TPLF, VLAS…AMVL, and GAFF…AVAI. Residues 532–655 enclose the STAS domain; sequence QYPKAEQIPG…LTVADAVATY (124 aa).

Belongs to the SLC26A/SulP transporter (TC 2.A.53) family.

The protein localises to the membrane. Its function is as follows. High-affinity H(+)/sulfate cotransporter that mediates the uptake of sulfate by plant roots from low concentrations of sulfate in the soil solution. The protein is High affinity sulfate transporter 2 (ST2) of Stylosanthes hamata (Caribbean stylo).